A 2167-amino-acid chain; its full sequence is GTPase-activating protein BEM2/IPL2 (2167 aa).

3 disordered regions span residues 1 to 209 (MKGL…NDNE), 243 to 305 (TNYN…ASAR), and 353 to 372 (NSSI…NNQA). The span at 12–51 (SSTASASSSSTSTSHKTTTASTASSSSPSSSSQTIRNSTS) shows a compositional bias: low complexity. K27 participates in a covalent cross-link: Glycyl lysine isopeptide (Lys-Gly) (interchain with G-Cter in ubiquitin). Positions 58–70 (HSHHHHGQGHSHH) are enriched in basic residues. Residues 89-118 (KQYTSTSSSQVNLGMYHSDTNTRSSRSIAS) show a composition bias toward polar residues. S129 bears the Phosphoserine mark. Positions 134-145 (SNSSSQKSNAQD) are enriched in polar residues. 2 stretches are compositionally biased toward low complexity: residues 160 to 177 (SLLP…SRCS) and 187 to 207 (NTSG…NNND). Polar residues predominate over residues 243-252 (TNYNSSMTAP). S283 bears the Phosphoserine mark. Low complexity predominate over residues 289–300 (SSSTTATNSGND). One can recognise a Ras-GEF domain in the interval 592 to 859 (DITTLADEVH…MKLSVQHEPP (268 aa)). Residues S1012 and S1016 each carry the phosphoserine modification. Phosphothreonine is present on T1038. Phosphoserine is present on residues S1046, S1054, and S1128. Positions 1771–1794 (ISGTHSDNDHSYNINKNTGQTPSL) are enriched in polar residues. The tract at residues 1771–1828 (ISGTHSDNDHSYNINKNTGQTPSLGSVMESNNSARNRRDSRASFSTNRSSVVSNSSHN) is disordered. The span at 1812 to 1828 (ASFSTNRSSVVSNSSHN) shows a compositional bias: low complexity. Positions 1846–1948 (GFNTSSSNYS…WIKMIKASKR (103 aa)) constitute a PH domain. The Rho-GAP domain maps to 1967 to 2165 (VPLEDVCERE…DFIKNPNDYF (199 aa)).

Functionally, GTPase-activating protein (GAP) for RHO1 and RHO2. Involved in the control of cellular morphogenesis. Required for proper bud site selection and bud emergence. The polypeptide is GTPase-activating protein BEM2/IPL2 (BEM2) (Saccharomyces cerevisiae (strain ATCC 204508 / S288c) (Baker's yeast)).